The following is a 185-amino-acid chain: Coiled-coil domain-containing protein 32 (185 aa).

A coiled-coil region spans residues 78–98 (LASLEKKLRRIKGLNQEVTSK). The segment at 159–185 (IPPESQVEKPVAEDEPAAGDKPAAAEQ) is disordered.

In terms of assembly, interacts with AP2S1; the interaction is direct and mediates association with adaptor protein complex 2 (AP-2).

It localises to the membrane. Its subcellular location is the coated pit. Its function is as follows. Regulates clathrin-mediated endocytsois of cargos such as transferrin probably through the association and modulation of adaptor protein complex 2 (AP-2). Has a role in ciliogenesis. Required for proper cephalic and left/right axis development. This chain is Coiled-coil domain-containing protein 32, found in Homo sapiens (Human).